A 105-amino-acid polypeptide reads, in one-letter code: Endoribonuclease MazF1 (105 aa).

This sequence belongs to the PemK/MazF family. In terms of assembly, forms a complex with cognate antitoxin MazE1.

Its function is as follows. Toxic component of a type II toxin-antitoxin (TA) system. Acts as an endoribonuclease on single-strand RNA, cleaving between the first and second bases in the sequence UCGCU. Neutralized by coexpression with cognate antitoxin MazE1. In Mycobacterium bovis (strain ATCC BAA-935 / AF2122/97), this protein is Endoribonuclease MazF1 (mazF1).